The primary structure comprises 251 residues: Adapter protein MecA (251 aa).

This sequence belongs to the MecA family. As to quaternary structure, homodimer.

In terms of biological role, enables the recognition and targeting of unfolded and aggregated proteins to the ClpC protease or to other proteins involved in proteolysis. The sequence is that of Adapter protein MecA from Streptococcus agalactiae serotype Ia (strain ATCC 27591 / A909 / CDC SS700).